A 576-amino-acid polypeptide reads, in one-letter code: MRPAAATAPKWLLLALSALLPLWPTAKSWELTIMHTNDVHSRLEQTSDDSTKCLNASLCVGGVARLFTKVQQIRKEEPNVLLLDAGDQYQGTIWFTVYKGLEVAHFMNLLGYDAMALGNHEFDNGVEGLIDPLLRNVKFPILSANIKARGPLAPQISGLYLPYKVLSVGGEVVGIVGYTSKETPFLSNPGTNLVFEDEVTALQPEVDKLKTLNVNKIIALGHSGFEMDKLIAQKVRGVDVVVGGHTNTFLYTGNPPSKEVPAGKYPFIVTSDDGRKVPVVQAYAFGKYLGYLKVEFDDKGNVVTSYGNPILLNSTIREDAAIKADINQWRIKLDNYSTQELGRTIVYLNGSAQECRFRECNMGNLICDAMINNNLRHPDEMFWNHVSMCIVNGGGIRSPIDERNNGTITWENLAAVLPFGGTFDLVQLKGSTLKKAFEHSVHRYGQSTGEFLQVGGIHVVYDISRKPWDRVVQLKVLCTKCRVPIYEPLEMDKVYKVVLPSYLVNGGDGFQMIKDELLKHDSGDQDISVVSEYISKMKVIYPAVEGRIKFSAASHYQGSFPLIILSFWAVILVLYQ.

Residues 1–28 (MRPAAATAPKWLLLALSALLPLWPTAKS) form the signal peptide. Zn(2+) contacts are provided by Asp38 and His40. Cys53 and Cys59 are disulfide-bonded. An N-linked (GlcNAc...) asparagine glycan is attached at Asn55. Zn(2+) contacts are provided by Asp87, Asn119, His222, and His245. N-linked (GlcNAc...) asparagine glycans are attached at residues Asn313, Asn335, and Asn349. 2 disulfide bridges follow: Cys355-Cys360 and Cys367-Cys389. Residue Arg356 coordinates AMP. Residue Arg356 coordinates IMP. Positions 392 and 397 each coordinate AMP. IMP contacts are provided by Asn392 and Arg397. The N-linked (GlcNAc...) asparagine glycan is linked to Asn405. Phe419 is an AMP binding site. Phe419 serves as a coordination point for IMP. Cysteines 478 and 481 form a disulfide. 2 residues coordinate AMP: Tyr502 and Asp508. IMP is bound by residues Tyr502 and Asp508. Ser551 carries the GPI-anchor amidated serine lipid modification. Positions 552–576 (AASHYQGSFPLIILSFWAVILVLYQ) are cleaved as a propeptide — removed in mature form.

The protein belongs to the 5'-nucleotidase family. As to quaternary structure, homodimer. Zn(2+) serves as cofactor. As to expression, expressed in the brain.

The protein localises to the cell membrane. It catalyses the reaction a ribonucleoside 5'-phosphate + H2O = a ribonucleoside + phosphate. It carries out the reaction a 2'-deoxyribonucleoside 5'-phosphate + H2O = a 2'-deoxyribonucleoside + phosphate. The enzyme catalyses dTMP + H2O = thymidine + phosphate. The catalysed reaction is CMP + H2O = cytidine + phosphate. It catalyses the reaction IMP + H2O = inosine + phosphate. It carries out the reaction AMP + H2O = adenosine + phosphate. The enzyme catalyses GMP + H2O = guanosine + phosphate. The catalysed reaction is UMP + H2O = uridine + phosphate. It catalyses the reaction dAMP + H2O = 2'-deoxyadenosine + phosphate. It carries out the reaction dCMP + H2O = 2'-deoxycytidine + phosphate. In terms of biological role, catalyzes the hydrolysis of nucleotide monophosphates, releasing inorganic phosphate and the corresponding nucleoside. AMP is the preferred substrate but can also hydrolyze CMP and GMP. Shows a preference for ribonucleotide monophosphates over their equivalent deoxyribose forms. Other substrates include IMP, UMP, dAMP, dCMP, dTMP, NAD and NMN. This chain is 5'-nucleotidase (Nt5e), found in Rattus norvegicus (Rat).